The following is a 551-amino-acid chain: High-affinity glucose transporter (551 aa).

Over 1 to 27 the chain is Cytoplasmic; the sequence is MSLKNWLLLRDIQYEGTFYKKFPHVYN. The chain crosses the membrane as a helical span at residues 28–48; it reads IYVIGFIACISGLMFGFDIAS. The Extracellular segment spans residues 49–70; the sequence is MSSMIGTDVYKDYFSNPDSLTY. A helical transmembrane segment spans residues 71–91; it reads GGITASMAGGSFLGSLISPNF. Topologically, residues 92–98 are cytoplasmic; it reads SDAFGRK. Residues 99–119 traverse the membrane as a helical segment; the sequence is VSLHICAALWIIGAILQCAAQ. At 120–123 the chain is on the extracellular side; it reads DQAM. The helical transmembrane segment at 124 to 144 threads the bilayer; sequence LIVGRVISGMGIGFGSSAAPV. The Cytoplasmic portion of the chain corresponds to 145-155; it reads YCSEISPPKIR. A helical membrane pass occupies residues 156–176; it reads GTISGLFQFSVTVGIMVLFYI. Topologically, residues 177–190 are extracellular; that stretch reads GYGCHFIDGAAAFR. A helical membrane pass occupies residues 191–211; the sequence is ITWGLQMVPGLILMVGVFFIP. Residues 212–289 are Cytoplasmic-facing; it reads ESPRWLANHD…VGVSAQMWQQ (78 aa). The helical transmembrane segment at 290–310 threads the bilayer; it reads LCGMNVMMYYIVYIFNMAGYT. Residues 311–315 are Extracellular-facing; that stretch reads GNTNL. A helical transmembrane segment spans residues 316-336; sequence VASSIQYVLNVVMTIPALFLI. Topologically, residues 337 to 343 are cytoplasmic; that stretch reads DKFGRRP. Residues 344–364 traverse the membrane as a helical segment; that stretch reads VLIIGGIFMFTWLFSVAGILA. Residues 365–395 are Extracellular-facing; that stretch reads TYSVPAPGGVNGDDTVTIQIPSENTSAANGV. Asparagine 388 carries an N-linked (GlcNAc...) asparagine glycan. A helical transmembrane segment spans residues 396 to 416; that stretch reads IASSYLFVCFFAPTWGIGIWI. The Cytoplasmic portion of the chain corresponds to 417 to 432; it reads YCSEIFNNMERAKGSA. A helical membrane pass occupies residues 433-453; the sequence is LSAATNWAFNFALAMFVPSAF. Residues 454–459 lie on the Extracellular side of the membrane; that stretch reads KNISWK. A helical transmembrane segment spans residues 460 to 480; that stretch reads TYIIFGVFSVALTIQTFFMFP. At 481 to 551 the chain is on the cytoplasmic side; it reads ETKGKTLEEI…DRSDSASNSN (71 aa).

The protein belongs to the major facilitator superfamily. Sugar transporter (TC 2.A.1.1) family.

Its subcellular location is the membrane. Its function is as follows. High-affinity glucose transporter. This chain is High-affinity glucose transporter (HGT1), found in Kluyveromyces lactis (strain ATCC 8585 / CBS 2359 / DSM 70799 / NBRC 1267 / NRRL Y-1140 / WM37) (Yeast).